Consider the following 422-residue polypeptide: F-box protein At3g12350 (422 aa).

Positions 5-52 constitute an F-box domain; sequence ALPFCEIPEDLQLRILSLLTPAEISSFACTSKRFASLCQEDGKIWHVM. Basic and acidic residues-rich tracts occupy residues 197 to 207 and 242 to 252; these read NNRREDQRSSG and KEKERQASRTK. Disordered stretches follow at residues 197–216 and 226–252; these read NNRR…LISS and LANK…SRTK.

This Arabidopsis thaliana (Mouse-ear cress) protein is F-box protein At3g12350.